We begin with the raw amino-acid sequence, 136 residues long: Large ribosomal subunit protein uL16 (136 aa).

Belongs to the universal ribosomal protein uL16 family. Part of the 50S ribosomal subunit.

Binds 23S rRNA and is also seen to make contacts with the A and possibly P site tRNAs. In Vibrio atlanticus (strain LGP32) (Vibrio splendidus (strain Mel32)), this protein is Large ribosomal subunit protein uL16.